Here is a 603-residue protein sequence, read N- to C-terminus: MVIHKKIAVVDFGGQYAHLIASRIRRLGAYTEILSNEEPISNYQKYSGIILSGGPESVYEPNSPTVTTRIFDLGIPILGICYGHQLIMKLLGGVVERSGTGEYGPASLQLHGTNGNSILKNFVGGEQVWMNHADEVVKLPEGFSKIAFSKDCGYAVVANSSKKIFGIQFHAEVSHSEKGSVLLDNFIQICGVSKTWGIDQFLKEKIKEIQETVKQEQKIFMLVSGGVDSTVSYLLLCKALGAERVLGFLIDTGFMRKDEVVSLQKKLTFQNIHLTVRDESSLFYKSLKDKSDPEEKRKIVGNLFLEARDRAVKDLDLEYGDWLLGQGTIYPDTIESGGTKHSHTIKTHHNRVEAIQKLIEQGKVIEPIRDLYKDEVRDLGVLLGLESEWVGRHPFPGPGLVVRMLAVEKKGTDKDQLEIDSYLSTQDGLSGKILPIASVGVKGDRRSYANCVVLNDIETDWNTLDRVATHLSNRFSFINRVVLLPFESDLKKWNFQFTGMQLDKKCSDLLREADFTVESVIRKLGLYNKIWQMPVVLLPIGEKENEKSIVLRPVESQEAMTANFFRMERSVLQEIKIEVLKIPEIRYLFFDLTNKPPGTIEWE.

The region spanning 6 to 195 (KIAVVDFGGQ…FIQICGVSKT (190 aa)) is the Glutamine amidotransferase type-1 domain. The Nucleophile role is filled by C81. Residues H170 and E172 contribute to the active site. The GMPS ATP-PPase domain maps to 196-392 (WGIDQFLKEK…LGLESEWVGR (197 aa)). Residue 224 to 230 (SGGVDST) participates in ATP binding.

In terms of assembly, homodimer.

It carries out the reaction XMP + L-glutamine + ATP + H2O = GMP + L-glutamate + AMP + diphosphate + 2 H(+). Its pathway is purine metabolism; GMP biosynthesis; GMP from XMP (L-Gln route): step 1/1. In terms of biological role, catalyzes the synthesis of GMP from XMP. The protein is Probable GMP synthase [glutamine-hydrolyzing] (guaA) of Leptospira interrogans serogroup Icterohaemorrhagiae serovar copenhageni (strain Fiocruz L1-130).